A 296-amino-acid chain; its full sequence is uncharacterized protein (296 aa).

6 helical membrane-spanning segments follow: residues 1–21 (MVNL…IFDY), 30–50 (LITA…GFWL), 71–91 (FISF…FVLC), 92–112 (LAQL…STLA), 113–133 (IGLA…LVLF), and 142–162 (IEVA…TTIC).

It belongs to the MscS (TC 1.A.23) family.

It is found in the cell membrane. This is an uncharacterized protein from Synechocystis sp. (strain ATCC 27184 / PCC 6803 / Kazusa).